Reading from the N-terminus, the 701-residue chain is Protein mono-ADP-ribosyltransferase PARP12 (701 aa).

C3H1-type zinc fingers lie at residues 94-119 (LCRFMVYGACKFLRAGKNCRNSHSLT), 150-179 (WLLPEICQHYNKGDGPHGSCAFQKQCIKLH), and 180-202 (ICQYFLQGECKFGTSCKRSHDFS). The tract at residues 234–268 (KNKSSAPSRVPPLFVPQGTSERKDSSGSVSPNTLS) is disordered. Residue S258 is modified to Phosphoserine. Residues 259-268 (SGSVSPNTLS) show a composition bias toward polar residues. 2 C3H1-type zinc fingers span residues 270 to 297 (EEGDQICLYHIRKSCSFQDKCHRVHFHL) and 271 to 296 (EGDQICLYHIRKSCSFQDKCHRVHFH). WWE domains follow at residues 298–361 (PYRW…RLST) and 364–458 (SVTK…KVCR). C474 carries the ADP-ribosylcysteine modification. The PARP catalytic domain occupies 484–698 (IPDYWDSSAL…ILLALGSLFS (215 aa)). An ADP-ribosyl aspartic acid mark is found at D600 and D611.

Belongs to the ARTD/PARP family. As to quaternary structure, interacts with PARP11; this interaction plays a key role in zika virus suppression. Interacts with ISG15. Auto-mono-ADP-ribosylated. Post-translationally, phosphorylated by PRKD1.

It is found in the nucleus. The protein resides in the golgi apparatus. It localises to the trans-Golgi network. Its subcellular location is the cytoplasm. The protein localises to the stress granule. The enzyme catalyses L-aspartyl-[protein] + NAD(+) = 4-O-(ADP-D-ribosyl)-L-aspartyl-[protein] + nicotinamide. The catalysed reaction is L-cysteinyl-[protein] + NAD(+) = S-(ADP-D-ribosyl)-L-cysteinyl-[protein] + nicotinamide + H(+). In terms of biological role, mono-ADP-ribosyltransferase that mediates mono-ADP-ribosylation of target proteins. Acts as an antiviral factor by cooperating with PARP11 to suppress Zika virus replication. Displays anti-alphavirus activity during IFN-gamma immune activation by directly ADP-ribosylating the alphaviral non-structural proteins nsP3 and nsP4. Acts as a component of the PRKD1-driven regulatory cascade that selectively controls a major branch of the basolateral transport pathway by catalyzing the MARylation of GOLGA1. Acts also as a key regulator of mitochondrial function, protein translation, and inflammation. Inhibits PINK1/Parkin-dependent mitophagy and promotes cartilage degeneration by inhibiting the ubiquitination and SUMOylation of MFN1/2 by upregulating ISG15 and ISGylation. The protein is Protein mono-ADP-ribosyltransferase PARP12 of Homo sapiens (Human).